The chain runs to 301 residues: GTPase Era (301 aa).

An Era-type G domain is found at 7–175 (YCGFIAIVGR…AAIVRKHLPE (169 aa)). The interval 15 to 22 (GRPNVGKS) is G1. 15 to 22 (GRPNVGKS) serves as a coordination point for GTP. The G2 stretch occupies residues 41 to 45 (QTTRH). The interval 62 to 65 (DTPG) is G3. GTP contacts are provided by residues 62–66 (DTPGL) and 124–127 (NKVD). The G4 stretch occupies residues 124 to 127 (NKVD). The G5 stretch occupies residues 154-156 (ISA). The KH type-2 domain occupies 206–283 (LGAELPYSVT…HLELWVKVKS (78 aa)).

This sequence belongs to the TRAFAC class TrmE-Era-EngA-EngB-Septin-like GTPase superfamily. Era GTPase family. As to quaternary structure, monomer.

Its subcellular location is the cytoplasm. The protein localises to the cell inner membrane. An essential GTPase that binds both GDP and GTP, with rapid nucleotide exchange. Plays a role in 16S rRNA processing and 30S ribosomal subunit biogenesis and possibly also in cell cycle regulation and energy metabolism. The polypeptide is GTPase Era (Shigella flexneri).